The primary structure comprises 100 residues: Aspartyl/glutamyl-tRNA(Asn/Gln) amidotransferase subunit C (100 aa).

This sequence belongs to the GatC family. In terms of assembly, heterotrimer of A, B and C subunits.

The catalysed reaction is L-glutamyl-tRNA(Gln) + L-glutamine + ATP + H2O = L-glutaminyl-tRNA(Gln) + L-glutamate + ADP + phosphate + H(+). It carries out the reaction L-aspartyl-tRNA(Asn) + L-glutamine + ATP + H2O = L-asparaginyl-tRNA(Asn) + L-glutamate + ADP + phosphate + 2 H(+). In terms of biological role, allows the formation of correctly charged Asn-tRNA(Asn) or Gln-tRNA(Gln) through the transamidation of misacylated Asp-tRNA(Asn) or Glu-tRNA(Gln) in organisms which lack either or both of asparaginyl-tRNA or glutaminyl-tRNA synthetases. The reaction takes place in the presence of glutamine and ATP through an activated phospho-Asp-tRNA(Asn) or phospho-Glu-tRNA(Gln). This is Aspartyl/glutamyl-tRNA(Asn/Gln) amidotransferase subunit C from Rickettsia felis (strain ATCC VR-1525 / URRWXCal2) (Rickettsia azadi).